A 92-amino-acid polypeptide reads, in one-letter code: Small ribosomal subunit protein uS19c (92 aa).

The protein belongs to the universal ribosomal protein uS19 family.

It localises to the plastid. Its subcellular location is the chloroplast. Its function is as follows. Protein S19 forms a complex with S13 that binds strongly to the 16S ribosomal RNA. The sequence is that of Small ribosomal subunit protein uS19c from Gossypium barbadense (Sea Island cotton).